We begin with the raw amino-acid sequence, 536 residues long: Dual specificity calcium/calmodulin-dependent 3',5'-cyclic nucleotide phosphodiesterase 1B (536 aa).

Positions 1–20 (MELSPRSPPEMLEESDCPSP) are disordered. Phosphoserine occurs at positions 7 and 15. 2 calmodulin-binding regions span residues 27 to 47 (PSKK…KQLE) and 118 to 141 (EKPK…MFRR). The PDEase domain occupies 146-503 (VGPTYSTAVL…QKWKERAASG (358 aa)). The active-site Proton donor is H223. Zn(2+) is bound by residues H227, H263, D264, and D370. Position 264 (D264) interacts with Mg(2+). Disordered stretches follow at residues 447-474 (LADE…VGDP) and 494-536 (QKWK…GNLD). The segment covering 455–464 (KNQPSFQWRQ) has biased composition (polar residues). Phosphoserine is present on residues S466 and S514.

This sequence belongs to the cyclic nucleotide phosphodiesterase family. PDE1 subfamily. Homodimer. Zn(2+) serves as cofactor. Requires Mg(2+) as cofactor.

It localises to the cytoplasm. The protein resides in the cytosol. The catalysed reaction is a nucleoside 3',5'-cyclic phosphate + H2O = a nucleoside 5'-phosphate + H(+). It catalyses the reaction 3',5'-cyclic GMP + H2O = GMP + H(+). The enzyme catalyses 3',5'-cyclic AMP + H2O = AMP + H(+). Type I PDE are activated by the binding of calmodulin in the presence of Ca(2+). Cyclic nucleotide phosphodiesterase with a dual specificity for the second messengers cAMP and cGMP, which are key regulators of many important physiological processes. Has a preference for cGMP as a substrate. This chain is Dual specificity calcium/calmodulin-dependent 3',5'-cyclic nucleotide phosphodiesterase 1B, found in Homo sapiens (Human).